A 460-amino-acid chain; its full sequence is Muscarinic acetylcholine receptor M1 (460 aa).

Topologically, residues 1–22 are extracellular; sequence MNTSAPPAVSPNITVLAPGKGP. N-linked (GlcNAc...) asparagine glycans are attached at residues N2 and N12. The helical transmembrane segment at 23 to 48 threads the bilayer; that stretch reads WQVAFIGITTGLLSLATVTGNLLVLI. The Cytoplasmic portion of the chain corresponds to 49–62; the sequence is SFKVNTELKTVNNY. The chain crosses the membrane as a helical span at residues 63 to 84; it reads FLLSLACADLIIGTFSMNLYTT. Residues 85–95 lie on the Extracellular side of the membrane; that stretch reads YLLMGHWALGT. The chain crosses the membrane as a helical span at residues 96 to 121; the sequence is LACDLWLALDYVASNASVMNLLLISF. The cysteines at positions 98 and 178 are disulfide-linked. The Cytoplasmic portion of the chain corresponds to 122 to 142; the sequence is DRYFSVTRPLSYRAKRTPRRA. A helical transmembrane segment spans residues 143–164; it reads ALMIGLAWLVSFVLWAPAILFW. At 165–185 the chain is on the extracellular side; the sequence is QYLVGERTVLAGQCYIQFLSQ. A helical membrane pass occupies residues 186-209; that stretch reads PIITFGTAMAAFYLPVTVMCTLYW. Residues 210–366 are Cytoplasmic-facing; the sequence is RIYRETENRA…LVKEKKAART (157 aa). 3 disordered regions span residues 225 to 259, 273 to 297, and 310 to 351; these read LQGS…PGRC, SWKE…EEPG, and EAQA…QLAK. T230 bears the Phosphothreonine mark. Low complexity predominate over residues 238–247; sequence SSSSERSQPG. The span at 328–343 shows a compositional bias: basic residues; sequence RPTKKGRDRAGKGQKP. A helical membrane pass occupies residues 367-390; the sequence is LSAILLAFILTWTPYNIMVLVSTF. Residues 391–401 are Extracellular-facing; it reads CKDCVPETLWE. Residues 402–420 form a helical membrane-spanning segment; the sequence is LGYWLCYVNSTINPMCYAL. The Cytoplasmic portion of the chain corresponds to 421-460; it reads CNKAFRDTFRLLLLCRWDKRRWRKIPKRPGSVHRTPSRQC. T428 bears the Phosphothreonine mark. S451 carries the post-translational modification Phosphoserine. T455 is subject to Phosphothreonine. The residue at position 457 (S457) is a Phosphoserine.

This sequence belongs to the G-protein coupled receptor 1 family. Muscarinic acetylcholine receptor subfamily. CHRM1 sub-subfamily. As to quaternary structure, interacts with GPRASP2. Interacts with TMEM147.

The protein resides in the cell membrane. It is found in the postsynaptic cell membrane. Functionally, the muscarinic acetylcholine receptor mediates various cellular responses, including inhibition of adenylate cyclase, breakdown of phosphoinositides and modulation of potassium channels through the action of G proteins. Primary transducing effect is Pi turnover. This is Muscarinic acetylcholine receptor M1 (CHRM1) from Macaca mulatta (Rhesus macaque).